Here is a 75-residue protein sequence, read N- to C-terminus: Ribonuclease pancreatic (75 aa).

Disulfide bonds link cysteine 7/cysteine 65 and cysteine 46/cysteine 53. N-linked (GlcNAc...) asparagine glycosylation is present at asparagine 15. Substrate-binding positions include 22–26 (KPVNT), lysine 47, and arginine 66.

The protein belongs to the pancreatic ribonuclease family. Monomer. Interacts with and forms tight 1:1 complexes with RNH1. Dimerization of two such complexes may occur. Interaction with RNH1 inhibits this protein. As to expression, pancreas.

The protein localises to the secreted. It catalyses the reaction an [RNA] containing cytidine + H2O = an [RNA]-3'-cytidine-3'-phosphate + a 5'-hydroxy-ribonucleotide-3'-[RNA].. The catalysed reaction is an [RNA] containing uridine + H2O = an [RNA]-3'-uridine-3'-phosphate + a 5'-hydroxy-ribonucleotide-3'-[RNA].. In terms of biological role, endonuclease that catalyzes the cleavage of RNA on the 3' side of pyrimidine nucleotides. Acts on single-stranded and double-stranded RNA. This Oryx leucoryx (Arabian oryx) protein is Ribonuclease pancreatic (rnase1).